We begin with the raw amino-acid sequence, 1049 residues long: Protein phosphatase Slingshot homolog 1 (1049 aa).

Residues 1 to 12 are compositionally biased toward polar residues; sequence MALVTLQRSPTP. The segment at 1–28 is disordered; it reads MALVTLQRSPTPSAASSSASNSELEAGS. At A2 the chain carries N-acetylalanine. Residues 13-25 are compositionally biased toward low complexity; that stretch reads SAASSSASNSELE. Phosphoserine occurs at positions 37 and 57. The 56-residue stretch at 249-304 folds into the DEK-C domain; that stretch reads ERTERLIKAKLRSIMMSQDLENVTSKEIRNELEKQMNCNLKELKEFIDNEMLLILG. The Tyrosine-protein phosphatase domain occupies 308 to 449; sequence KPSLIFDHLY…LSEYEGILDA (142 aa). Catalysis depends on C393, which acts as the Phosphocysteine intermediate. Residues 456 to 499 form a disordered region; it reads KLWRQQTDSSLQQPVDDPAGPGDFLPETPDGTPESQLPFLDDAA. The span at 458 to 468 shows a compositional bias: polar residues; the sequence is WRQQTDSSLQQ. Position 515 is a phosphoserine (S515). Disordered stretches follow at residues 544-603, 693-787, 825-899, and 923-955; these read AAPP…RWGQ, HLAS…KPAK, HTKE…KSPP, and PTSS…KQRT. Basic and acidic residues predominate over residues 564-573; sequence CEKDVKKKLE. Residue S576 is modified to Phosphoserine. The span at 731–742 shows a compositional bias: low complexity; that stretch reads GAALEPPASLLE. The span at 772-787 shows a compositional bias: basic and acidic residues; it reads VIKEESSPKKDMKPAK. Phosphoserine is present on S897. The segment at 897–1049 is interaction with YWHAG; the sequence is SPPPFFYRLD…LKSPSWMSKS (153 aa). A compositionally biased stretch (low complexity) spans 925–943; it reads SSSMSSNLTRSSSSDSIHS. The residue at position 978 (S978) is a Phosphoserine. The disordered stretch occupies residues 989-1049; the sequence is TEDLSSEADP…LKSPSWMSKS (61 aa). Polar residues predominate over residues 1001-1013; that stretch reads VADSQDTTLSESS.

This sequence belongs to the protein-tyrosine phosphatase family. In terms of assembly, interacts with actin and this stimulates phosphatase activity. Also interacts with LIMK1 and with the 14-3-3 proteins YWHAB, YWHAG, YWHAQ, and YWHAZ. Interaction with 14-3-3 proteins inhibits phosphatase activity and also blocks recruitment to lamellipodia and stimulation by actin. Phosphorylated. Inhibitory phosphorylation by PAK4 promotes binding to YWHAZ. Phosphorylation at Ser-978 is decreased by stimuli which promote actin reorganization and lamellipodia formation. Can be dephosphorylated and activated by PPP3CA/calcineurin A. Phosphorylation decreases immediately prior to telophase.

It localises to the cytoplasm. The protein localises to the cytoskeleton. It is found in the cell projection. Its subcellular location is the lamellipodium. The protein resides in the cleavage furrow. It localises to the midbody. The catalysed reaction is O-phospho-L-tyrosyl-[protein] + H2O = L-tyrosyl-[protein] + phosphate. It carries out the reaction O-phospho-L-seryl-[protein] + H2O = L-seryl-[protein] + phosphate. It catalyses the reaction O-phospho-L-threonyl-[protein] + H2O = L-threonyl-[protein] + phosphate. Functionally, protein phosphatase which regulates actin filament dynamics. Dephosphorylates and activates the actin binding/depolymerizing factor cofilin, which subsequently binds to actin filaments and stimulates their disassembly. Inhibitory phosphorylation of cofilin is mediated by LIMK1, which may also be dephosphorylated and inactivated by this protein. This Homo sapiens (Human) protein is Protein phosphatase Slingshot homolog 1.